The sequence spans 175 residues: Ribosome maturation factor RimM (175 aa).

The PRC barrel domain occupies 96–175 (EGDYYWHDLI…TITVDWDAGF (80 aa)).

This sequence belongs to the RimM family. Binds ribosomal protein uS19.

It localises to the cytoplasm. Functionally, an accessory protein needed during the final step in the assembly of 30S ribosomal subunit, possibly for assembly of the head region. Essential for efficient processing of 16S rRNA. May be needed both before and after RbfA during the maturation of 16S rRNA. It has affinity for free ribosomal 30S subunits but not for 70S ribosomes. The polypeptide is Ribosome maturation factor RimM (Actinobacillus pleuropneumoniae serotype 5b (strain L20)).